Consider the following 213-residue polypeptide: Protein FAM156A/FAM156B (213 aa).

The residue at position 1 (M1) is an N-acetylmethionine. A disordered region spans residues 1 to 62 (MDPLQKRNPA…SQAVPLPEGL (62 aa)). Residues 8-37 (NPASPSKSSPMTAAETSQEGPAPSQPSYSE) show a composition bias toward polar residues. Residue S114 is modified to Phosphoserine. The helical transmembrane segment at 154–170 (WETLVQGLSGLTLSLGT) threads the bilayer. Positions 165 to 198 (TLSLGTNQPGPLPEAALQPQETEEKRQRERQQES) are disordered. The span at 186-197 (TEEKRQRERQQE) shows a compositional bias: basic and acidic residues.

It localises to the membrane. The protein is Protein FAM156A/FAM156B (FAM156A) of Homo sapiens (Human).